We begin with the raw amino-acid sequence, 185 residues long: Peptide deformylase (185 aa).

Fe cation contacts are provided by Cys-94 and His-136. Glu-137 is a catalytic residue. A Fe cation-binding site is contributed by His-140.

This sequence belongs to the polypeptide deformylase family. Requires Fe(2+) as cofactor.

It carries out the reaction N-terminal N-formyl-L-methionyl-[peptide] + H2O = N-terminal L-methionyl-[peptide] + formate. Functionally, removes the formyl group from the N-terminal Met of newly synthesized proteins. Requires at least a dipeptide for an efficient rate of reaction. N-terminal L-methionine is a prerequisite for activity but the enzyme has broad specificity at other positions. This chain is Peptide deformylase, found in Chlorobium limicola (strain DSM 245 / NBRC 103803 / 6330).